The sequence spans 483 residues: tRNA-2-methylthio-N(6)-dimethylallyladenosine synthase (483 aa).

The MTTase N-terminal domain maps to 31–148; the sequence is KKLYIETQGC…LPQMLDQHQD (118 aa). 6 residues coordinate [4Fe-4S] cluster: cysteine 40, cysteine 77, cysteine 111, cysteine 192, cysteine 196, and cysteine 199. Positions 178 to 410 constitute a Radical SAM core domain; sequence RVEGFKAFVS…QHWIKQSSIR (233 aa). One can recognise a TRAM domain in the interval 413–477; that stretch reads DAMQGTIQRV…LNLVYGELLN (65 aa).

The protein belongs to the methylthiotransferase family. MiaB subfamily. As to quaternary structure, monomer. [4Fe-4S] cluster serves as cofactor.

It localises to the cytoplasm. The enzyme catalyses N(6)-dimethylallyladenosine(37) in tRNA + (sulfur carrier)-SH + AH2 + 2 S-adenosyl-L-methionine = 2-methylsulfanyl-N(6)-dimethylallyladenosine(37) in tRNA + (sulfur carrier)-H + 5'-deoxyadenosine + L-methionine + A + S-adenosyl-L-homocysteine + 2 H(+). Catalyzes the methylthiolation of N6-(dimethylallyl)adenosine (i(6)A), leading to the formation of 2-methylthio-N6-(dimethylallyl)adenosine (ms(2)i(6)A) at position 37 in tRNAs that read codons beginning with uridine. The polypeptide is tRNA-2-methylthio-N(6)-dimethylallyladenosine synthase (Acinetobacter baylyi (strain ATCC 33305 / BD413 / ADP1)).